Reading from the N-terminus, the 171-residue chain is MMKIVIYHSNECDPKRCTSIKLQKQNKVAITHNMRKIPYNAIVLDAEADKAVSREDREKITKYGLSALDCSWKKLKKSSFNFKSKKNHRLLPFLVAANPVNYGKPCILSSAEALSAALYIVGYKDEARDLMNSFKWGPHFITLNENLLEAYSEAKNSTEIVEVQNEFLGGK.

Residues Thr18, Leu68, Leu91, and Ser110 each coordinate S-adenosyl-L-methionine.

It belongs to the TDD superfamily. TSR3 family.

The protein resides in the cytoplasm. The catalysed reaction is an N(1)-methylpseudouridine in rRNA + S-adenosyl-L-methionine = N(1)-methyl-N(3)-[(3S)-3-amino-3-carboxypropyl]pseudouridine in rRNA + S-methyl-5'-thioadenosine + H(+). Its function is as follows. Aminocarboxypropyltransferase that catalyzes the aminocarboxypropyl transfer on pseudouridine corresponding to position 914 in M.jannaschii 16S rRNA. It constitutes the last step in biosynthesis of the hypermodified N1-methyl-N3-(3-amino-3-carboxypropyl) pseudouridine (m1acp3-Psi). The sequence is that of 16S rRNA aminocarboxypropyltransferase from Methanosphaera stadtmanae (strain ATCC 43021 / DSM 3091 / JCM 11832 / MCB-3).